Here is a 1015-residue protein sequence, read N- to C-terminus: DNA ligase 3 (1015 aa).

The segment at Phe-94–Ser-186 adopts a PARP-type zinc-finger fold. Zn(2+) is bound by residues Cys-106, Cys-109, His-140, and Cys-143. Phosphoserine occurs at positions 211, 217, 228, and 244. Positions Gly-229 to Lys-255 are disordered. Polar residues predominate over residues Lys-234–Ala-253. 4 interaction with DNA regions span residues Pro-279 to Asn-282, Val-323 to Asp-328, Thr-393 to Asp-396, and Lys-426 to Lys-432. Residue Glu-511 participates in ATP binding. Residue Lys-513 is the N6-AMP-lysine intermediate of the active site. Arg-518 and Arg-533 together coordinate ATP. Mg(2+)-binding residues include Glu-565 and Glu-660. ATP contacts are provided by Lys-665, Arg-676, and Lys-680. Positions Asp-849–Lys-926 are disordered. Over residues Thr-854–Lys-884 the composition is skewed to low complexity. Ser-919 is subject to Phosphoserine. The 77-residue stretch at Val-939–Cys-1015 folds into the BRCT domain.

Belongs to the ATP-dependent DNA ligase family. As to quaternary structure, isoform 3 interacts (via BRCT domain) with the nuclear DNA-repair protein XRCC1. Interacts with POLG. Interacts with POLB. Requires Mg(2+) as cofactor. The alpha isoform is expressed in all tissues, while the beta isoform is expressed only in the testis.

It localises to the nucleus. It catalyses the reaction ATP + (deoxyribonucleotide)n-3'-hydroxyl + 5'-phospho-(deoxyribonucleotide)m = (deoxyribonucleotide)n+m + AMP + diphosphate.. Functionally, the alpha isoform interacts with DNA-repair protein XRCC1 and can correct defective DNA strand-break repair and sister chromatid exchange following treatment with ionizing radiation and alkylating agents. The beta isoform does not interact with XRCC1 and may be specifically involved in the completion of homologous recombination events that occur during meiotic prophase. This is DNA ligase 3 (Lig3) from Mus musculus (Mouse).